A 314-amino-acid chain; its full sequence is Homeobox protein DBX1-A (314 aa).

The segment at residues 175–234 (GMLRRAVFSDVQRKALEKMFQKQKYISKPDRKKLAAKLGLKDSQVKIWFQNRRMKWRNSK) is a DNA-binding region (homeobox). 2 disordered regions span residues 234–279 (KERE…CAPS) and 292–314 (STDS…ITVS). The segment covering 258-267 (DLSDVGKKSS) has biased composition (basic and acidic residues). Residues 305–314 (SESEDEITVS) show a composition bias toward acidic residues.

It belongs to the H2.0 homeobox family.

It localises to the nucleus. This Danio rerio (Zebrafish) protein is Homeobox protein DBX1-A (dbx1a).